Reading from the N-terminus, the 312-residue chain is Probable cell division protein WhiA (312 aa).

Positions 274–308 form a DNA-binding region, H-T-H motif; sequence SLKELGTLVPGGPISKSGVNHRLRKLNAYADELRQ.

The protein belongs to the WhiA family.

Its function is as follows. Involved in cell division and chromosome segregation. This chain is Probable cell division protein WhiA, found in Limosilactobacillus fermentum (strain NBRC 3956 / LMG 18251) (Lactobacillus fermentum).